The following is a 497-amino-acid chain: Putative diacyglycerol O-acyltransferase Rv3480c (497 aa).

His-143 serves as the catalytic Proton acceptor.

Belongs to the long-chain O-acyltransferase family.

The enzyme catalyses an acyl-CoA + a 1,2-diacyl-sn-glycerol = a triacyl-sn-glycerol + CoA. The catalysed reaction is di-(9Z)-octadecenoylglycerol + (9Z)-octadecenoyl-CoA = 1,2,3-tri-(9Z-octadecenoyl)-glycerol + CoA. It catalyses the reaction hexadecan-1-ol + hexadecanoyl-CoA = hexadecanyl hexadecanoate + CoA. The protein operates within glycerolipid metabolism; triacylglycerol biosynthesis. In terms of biological role, upon expression in E.coli has a weak triacylglycerol synthase function, making triacylglycerol (TG) from diolein and long-chain fatty acyl-CoA. Also functions weakly as a wax synthase, as it incorporates palmityl alcohol into wax esters in the presence of palmitoyl-CoA. This chain is Putative diacyglycerol O-acyltransferase Rv3480c, found in Mycobacterium tuberculosis (strain ATCC 25618 / H37Rv).